The sequence spans 70 residues: U2-agatoxin-Ao1p (70 aa).

Residues 1-20 (MRAIISLILISAMVFSMIAA) form the signal peptide. The propeptide occupies 21–34 (VPXXEGLQLSEDER). Cystine bridges form between Cys-37–Cys-53, Cys-44–Cys-58, and Cys-52–Cys-68. Residue Leu-69 is modified to Leucine amide.

Belongs to the neurotoxin 01 (U2-agtx) family. Expressed by the venom gland.

The protein resides in the secreted. Insect active toxin causing rapid but reversible paralysis in crickets. No activity shown in mammals. Does not show effect on mammalian voltage-gated calcium channels. This is U2-agatoxin-Ao1p from Agelena orientalis (Funnel-web spider).